An 814-amino-acid polypeptide reads, in one-letter code: Glycosyltransferase GlyD (814 aa).

Residues 1 to 264 are GT8 domain; sequence MNKTIVLAGD…SQILQHHMGE (264 aa). Residues 8–13 and 102–103 each bind UDP; these read AGDRNY and DS. 3 residues coordinate Mn(2+): Asp-102, Asp-104, and His-226. UDP is bound at residue 226–232; it reads HFTTYRK. The tract at residues 542–814 is GT-D domain; that stretch reads EKPLDIIQVK…NSQIVARILN (273 aa).

This sequence in the N-terminal section; belongs to the glycosyltransferase 8 family. It in the C-terminal section; belongs to the GT-D family.

The protein operates within protein modification; protein glycosylation. Functionally, involved in the polymorphic O-glycosylation of the serine-rich repeat protein PsrP. Catalyzes the third step in glycosylation PsrP in this bacteria. Transfers glucose from UDP-glucose to the terminal glucose moiety of already-glycosylated PsrP (using truncated substrates with PsrP SSR1-GlcNAc-Glc); the C-terminal GT-D domain is sufficient for this reaction in vitro. Also transfers galactose from UDP-galactose to the terminal glucose moiety of already-glycosylated PsrP; the C-terminal GT-D domain is also sufficient for this reaction in vitro. Activity is much higher with UDP-glucose, and the enzyme has a very marked preference for PsrP substrate that has already been modified by GlcNAc and glucose. In vitro has hydrolytic activity against UDP-galactose and to a lesser extent against UDP-glucose. Also catalyzes the fourth step in glycosylation of PsrP in this bacteria. Can transfer the sugar from both UDP-glucose and UDP-galactose to the terminal sugar moiety of PsrP-GlcNAc-Glc-Glc and PsrP-GlcNAc-Glc-Gal; the C-terminal GT-D domain is also sufficient for this reaction in vitro (using truncated substrates with glycosylated PsrP SSR1). The N-terminal GT-D domain can transfer galactose from UDP-galactose to PsrP-GlcNAc-Glc-Gal or PsrP-GlcNAc-Glc-Glc in the fourth step. The sequence is that of Glycosyltransferase GlyD from Streptococcus pneumoniae serotype 4 (strain ATCC BAA-334 / TIGR4).